A 69-amino-acid chain; its full sequence is Cytoinsectotoxin-2a (69 aa).

Belongs to the cationic peptide 06 (cytoinsectotoxin) family. In terms of tissue distribution, expressed by the venom gland.

It is found in the secreted. Functionally, insecticidal and antimicrobial peptide. Has insecticidal activity against larvae of flesh fly S.carnaria. Has antibacterial activity against Gram-positive bacterium B.subtilis B-501 (MIC=1.25 uM) and Gram-negative bacterium E.coli DH5alpha (MIC=2.5 uM). This Lachesana tarabaevi (Spider) protein is Cytoinsectotoxin-2a.